A 178-amino-acid chain; its full sequence is Cytochrome b6-f complex iron-sulfur subunit (178 aa).

Residues 20-42 traverse the membrane as a helical segment; sequence LLTFGTVTGVALGALYPVAQYFT. In terms of domain architecture, Rieske spans 71 to 161; the sequence is THPVGDRSLV…VSIEDDQVLV (91 aa). Positions 107, 109, 125, and 128 each coordinate [2Fe-2S] cluster. A disulfide bond links cysteine 112 and cysteine 127.

It belongs to the Rieske iron-sulfur protein family. As to quaternary structure, the 4 large subunits of the cytochrome b6-f complex are cytochrome b6, subunit IV (17 kDa polypeptide, PetD), cytochrome f and the Rieske protein, while the 4 small subunits are PetG, PetL, PetM and PetN. The complex functions as a dimer. [2Fe-2S] cluster serves as cofactor.

The protein localises to the cellular thylakoid membrane. The enzyme catalyses 2 oxidized [plastocyanin] + a plastoquinol + 2 H(+)(in) = 2 reduced [plastocyanin] + a plastoquinone + 4 H(+)(out). Functionally, component of the cytochrome b6-f complex, which mediates electron transfer between photosystem II (PSII) and photosystem I (PSI), cyclic electron flow around PSI, and state transitions. The sequence is that of Cytochrome b6-f complex iron-sulfur subunit from Prochlorococcus marinus (strain NATL1A).